The chain runs to 317 residues: Ribosomal protein L11 methyltransferase (317 aa).

Positions 158, 179, 201, and 244 each coordinate S-adenosyl-L-methionine.

The protein belongs to the methyltransferase superfamily. PrmA family.

The protein resides in the cytoplasm. It carries out the reaction L-lysyl-[protein] + 3 S-adenosyl-L-methionine = N(6),N(6),N(6)-trimethyl-L-lysyl-[protein] + 3 S-adenosyl-L-homocysteine + 3 H(+). In terms of biological role, methylates ribosomal protein L11. This Streptococcus pyogenes serotype M18 (strain MGAS8232) protein is Ribosomal protein L11 methyltransferase.